The following is a 426-amino-acid chain: D-tagatose-1,6-bisphosphate aldolase subunit KbaZ (426 aa).

It belongs to the GatZ/KbaZ family. KbaZ subfamily. In terms of assembly, forms a complex with KbaY.

It functions in the pathway carbohydrate metabolism; D-tagatose 6-phosphate degradation; D-glyceraldehyde 3-phosphate and glycerone phosphate from D-tagatose 6-phosphate: step 2/2. In terms of biological role, component of the tagatose-1,6-bisphosphate aldolase KbaYZ that is required for full activity and stability of the Y subunit. Could have a chaperone-like function for the proper and stable folding of KbaY. When expressed alone, KbaZ does not show any aldolase activity. This is D-tagatose-1,6-bisphosphate aldolase subunit KbaZ from Shigella flexneri.